The sequence spans 585 residues: Testis-specific serine kinase substrate (585 aa).

Low complexity predominate over residues 91-108 (EPDSSGTDSTTEDSGPLA). Residues 91-126 (EPDSSGTDSTTEDSGPLALPGPPASPTTPWAPEDPD) are disordered. Ser-224, Ser-281, and Ser-309 each carry phosphoserine. 2 disordered regions span residues 262-309 (SRHG…PSLS) and 559-585 (LEGS…GSEQ).

In terms of processing, phosphorylated on serine residue(s) by STK22A/TSSK1 and STK22B/TSSK2.

It localises to the cytoplasm. The protein localises to the cytoskeleton. Its subcellular location is the microtubule organizing center. It is found in the centrosome. The protein resides in the centriole. In terms of biological role, may play a role in testicular physiology, most probably in the process of spermatogenesis or spermatid development. The protein is Testis-specific serine kinase substrate (Tsks) of Rattus norvegicus (Rat).